Consider the following 142-residue polypeptide: Large ribosomal subunit protein uL13 (142 aa).

It belongs to the universal ribosomal protein uL13 family. Part of the 50S ribosomal subunit.

In terms of biological role, this protein is one of the early assembly proteins of the 50S ribosomal subunit, although it is not seen to bind rRNA by itself. It is important during the early stages of 50S assembly. The sequence is that of Large ribosomal subunit protein uL13 from Pectobacterium atrosepticum (strain SCRI 1043 / ATCC BAA-672) (Erwinia carotovora subsp. atroseptica).